The sequence spans 415 residues: Zinc finger protein ZFMSA12A (415 aa).

Residues 1-36 (MGIQDARWPSEDEETHLLDSSSAEQTRGEKCSDSTP) form a disordered region. 12 consecutive C2H2-type zinc fingers follow at residues 78–100 (HKCT…QRLH), 106–129 (YRCS…RTQC), 134–156 (YICI…QCVH), 161–183 (FDCS…ELTH), 189–211 (FTCR…QKIH), 217–239 (NQCM…EVRH), 245–267 (QICA…MRSH), 273–295 (FQCT…VRTH), 301–323 (YLCS…RRTH), 329–351 (YKCS…MRVH), 357–379 (YVCS…SMNH), and 385–407 (YACQ…LKTH).

The protein resides in the nucleus. This is Zinc finger protein ZFMSA12A from Micropterus salmoides (Largemouth bass).